The sequence spans 358 residues: Peptide chain release factor 1 (358 aa).

Residue glutamine 237 is modified to N5-methylglutamine. Positions 291-309 (EESGYRKLAGHGDRSEKIR) are enriched in basic and acidic residues. The disordered stretch occupies residues 291–313 (EESGYRKLAGHGDRSEKIRTYNY).

This sequence belongs to the prokaryotic/mitochondrial release factor family. In terms of processing, methylated by PrmC. Methylation increases the termination efficiency of RF1.

It localises to the cytoplasm. In terms of biological role, peptide chain release factor 1 directs the termination of translation in response to the peptide chain termination codons UAG and UAA. This is Peptide chain release factor 1 from Mycoplasmopsis agalactiae (strain NCTC 10123 / CIP 59.7 / PG2) (Mycoplasma agalactiae).